A 522-amino-acid polypeptide reads, in one-letter code: Na(+)/H(+) antiporter NhaB (522 aa).

The next 11 helical transmembrane spans lie at 25 to 45, 49 to 69, 87 to 107, 128 to 162, 201 to 221, 237 to 257, 302 to 322, 356 to 376, 388 to 408, 446 to 466, and 476 to 496; these read VFLV…GWLL, FIFT…GMLA, ILAN…IYFM, LSLA…FYGV, LMMH…VGEP, FFFR…VTCI, VFVG…VGLI, LVVF…APVI, LLLF…VFVA, ATPN…SPLI, and MALP…EYVL.

The protein belongs to the NhaB Na(+)/H(+) (TC 2.A.34) antiporter family.

It localises to the cell inner membrane. It carries out the reaction 2 Na(+)(in) + 3 H(+)(out) = 2 Na(+)(out) + 3 H(+)(in). Na(+)/H(+) antiporter that extrudes sodium in exchange for external protons. The polypeptide is Na(+)/H(+) antiporter NhaB (Actinobacillus succinogenes (strain ATCC 55618 / DSM 22257 / CCUG 43843 / 130Z)).